The primary structure comprises 77 residues: Small ribosomal subunit protein bS21 (77 aa).

The protein belongs to the bacterial ribosomal protein bS21 family.

This is Small ribosomal subunit protein bS21 from Methylococcus capsulatus (strain ATCC 33009 / NCIMB 11132 / Bath).